The primary structure comprises 125 residues: UPF0538 protein C2C4.04c (125 aa).

This sequence belongs to the UPF0538 family.

This chain is UPF0538 protein C2C4.04c, found in Schizosaccharomyces pombe (strain 972 / ATCC 24843) (Fission yeast).